The chain runs to 285 residues: Isoprenyl transferase 2 (285 aa).

The disordered stretch occupies residues 11–30 (RREYRAPEPHPSGARAPKLP). Residue D43 is part of the active site. A Mg(2+)-binding site is contributed by D43. Substrate-binding positions include 44–47 (GNGR), W48, R56, H60, and 88–90 (STE). Residue N91 is the Proton acceptor of the active site. Substrate-binding positions include W92, R94, R211, and 217 to 219 (RTS). E230 is a Mg(2+) binding site.

This sequence belongs to the UPP synthase family. As to quaternary structure, homodimer. Mg(2+) serves as cofactor.

Catalyzes the condensation of isopentenyl diphosphate (IPP) with allylic pyrophosphates generating different type of terpenoids. This Streptomyces avermitilis (strain ATCC 31267 / DSM 46492 / JCM 5070 / NBRC 14893 / NCIMB 12804 / NRRL 8165 / MA-4680) protein is Isoprenyl transferase 2.